The primary structure comprises 420 residues: Serine protease inhibitor A3B (420 aa).

A signal peptide spans 1-17 (MAFIAALGLLMAEICPA). Residues N104 and N349 are each glycosylated (N-linked (GlcNAc...) asparagine). Residues 367–392 (GTEGDAITIVGYNFMSAKLKPVFVKF) are RCL.

The protein belongs to the serpin family.

The protein resides in the secreted. This chain is Serine protease inhibitor A3B (Serpina3b), found in Mus musculus (Mouse).